The sequence spans 498 residues: Lycopene beta cyclase, chloroplastic/chromoplastic (498 aa).

A chloroplast and chromoplast-targeting transit peptide spans 1–79; sequence MDTLLRTPNN…ELPMYDPSKG (79 aa). An NAD(+)-binding site is contributed by 84–112; sequence LAVVGGGPAGLAVAQQVSEAGLSVCSIDP. Residues 293-297 carry the FLEET motif motif; sequence FLEET.

Belongs to the lycopene cyclase family. As to quaternary structure, monomer. The cofactor is FAD. It depends on NADPH as a cofactor.

The protein localises to the plastid. The protein resides in the chloroplast. Its subcellular location is the chromoplast. The catalysed reaction is a carotenoid psi-end group = a carotenoid beta-end derivative. It carries out the reaction all-trans-lycopene = gamma-carotene. The enzyme catalyses gamma-carotene = all-trans-beta-carotene. It catalyses the reaction all-trans-neurosporene = beta-zeacarotene. The catalysed reaction is beta-zeacarotene = 7,8-dihydro-beta-carotene. It participates in carotenoid biosynthesis; beta-carotene biosynthesis. It functions in the pathway carotenoid biosynthesis; beta-zeacarotene biosynthesis. In terms of biological role, catalyzes the double cyclization reaction which converts lycopene to beta-carotene. Catalyzes the double cyclization reaction which converts neurosporene to 7,8-dihydro-beta-carotene. The sequence is that of Lycopene beta cyclase, chloroplastic/chromoplastic from Capsicum annuum (Capsicum pepper).